The sequence spans 204 residues: Large ribosomal subunit protein uL4 (204 aa).

The segment covering 42–52 has biased composition (polar residues); that stretch reads GTKAQKSRSQV. A disordered region spans residues 42 to 70; the sequence is GTKAQKSRSQVSGTTKKSKKQKGGGARHG.

Belongs to the universal ribosomal protein uL4 family. In terms of assembly, part of the 50S ribosomal subunit.

Its function is as follows. One of the primary rRNA binding proteins, this protein initially binds near the 5'-end of the 23S rRNA. It is important during the early stages of 50S assembly. It makes multiple contacts with different domains of the 23S rRNA in the assembled 50S subunit and ribosome. In terms of biological role, forms part of the polypeptide exit tunnel. This chain is Large ribosomal subunit protein uL4, found in Xylella fastidiosa (strain M12).